Reading from the N-terminus, the 312-residue chain is Ribonuclease Z (312 aa).

H62, H64, D66, H67, H139, D210, and H268 together coordinate Zn(2+). The active-site Proton acceptor is D66.

Belongs to the RNase Z family. Homodimer. It depends on Zn(2+) as a cofactor.

It carries out the reaction Endonucleolytic cleavage of RNA, removing extra 3' nucleotides from tRNA precursor, generating 3' termini of tRNAs. A 3'-hydroxy group is left at the tRNA terminus and a 5'-phosphoryl group is left at the trailer molecule.. In terms of biological role, zinc phosphodiesterase, which displays some tRNA 3'-processing endonuclease activity. Probably involved in tRNA maturation, by removing a 3'-trailer from precursor tRNA. This Crocosphaera subtropica (strain ATCC 51142 / BH68) (Cyanothece sp. (strain ATCC 51142)) protein is Ribonuclease Z.